A 470-amino-acid chain; its full sequence is PTS system trehalose-specific EIIBC component (470 aa).

The PTS EIIB type-1 domain maps to 1–88; it reads MGELNKSARQ…VKETGIGEST (88 aa). Residue C27 is the Phosphocysteine intermediate; for EIIB activity of the active site. C27 bears the Phosphocysteine; by EIIA mark. A PTS EIIC type-1 domain is found at 108–470; that stretch reads KTLADIFIPI…TYAYARFKHK (363 aa). 10 helical membrane-spanning segments follow: residues 110–130, 160–180, 183–203, 234–254, 263–283, 301–321, 326–346, 347–367, 403–423, and 443–463; these read LADIFIPILPAIVTAGLLMGI, INLIAGTAFTFLPALIGWSAV, FGGNPLLGIVLGVMLVHPDLL, GQVLPILLASYMLAKIEVFLT, LLVVAPITLLLTGFASFIIIG, FGSFAALGGLLYGGFYSALVI, HTFLAVDLQLIGSKLGGTFLW, PMLALSNIAQGSAALAMMFIV, FIIAMVSSGLAGMYISSQGVL, and WGAFAIGMAIVLIVPFAGTYA.

It localises to the cell membrane. The enzyme catalyses alpha,alpha-trehalose(out) + N(pros)-phospho-L-histidyl-[protein] = alpha,alpha-trehalose 6-phosphate(in) + L-histidyl-[protein]. Functionally, the phosphoenolpyruvate-dependent sugar phosphotransferase system (sugar PTS), a major carbohydrate active transport system, catalyzes the phosphorylation of incoming sugar substrates concomitantly with their translocation across the cell membrane. This system is involved in trehalose transport. In Bacillus subtilis (strain 168), this protein is PTS system trehalose-specific EIIBC component (treP).